The sequence spans 713 residues: Zinc finger and BTB domain-containing protein 1 (713 aa).

A Glycyl lysine isopeptide (Lys-Gly) (interchain with G-Cter in SUMO2) cross-link involves residue K3. A BTB domain is found at 24–91; the sequence is CDCCIAIDDI…MYLGKIMTAP (68 aa). Residues K200 and K205 each participate in a glycyl lysine isopeptide (Lys-Gly) (interchain with G-Cter in SUMO2) cross-link. The segment at 216–242 adopts a C2H2-type 1; atypical zinc-finger fold; sequence FTCDSCGFGFSCEKLLDEHVLTCTNRH. Glycyl lysine isopeptide (Lys-Gly) (interchain with G-Cter in SUMO2) cross-links involve residues K261, K266, K276, K284, K304, K316, K328, K340, and K346. Residues 270–319 are disordered; that stretch reads AEKDSSKTFSAQPDKYREDANQAPDDSASTTGSRKSTVEAGIAGEEKSRA. Residue S355 is modified to Phosphoserine. T356 carries the phosphothreonine modification. A Glycyl lysine isopeptide (Lys-Gly) (interchain with G-Cter in SUMO2) cross-link involves residue K381. The C2H2-type 2; atypical zinc-finger motif lies at 448–470; it reads CACGKCGQILVKGRQLQEHAQRC. A Glycyl lysine isopeptide (Lys-Gly) (interchain with G-Cter in SUMO2) cross-link involves residue K528. The UBZ-type zinc finger occupies 533 to 558; that stretch reads PFRCPNCGQRFETENLVVEHMSSCLD. A Glycyl lysine isopeptide (Lys-Gly) (interchain with G-Cter in SUMO2) cross-link involves residue K563. 5 consecutive C2H2-type zinc fingers follow at residues 578-600, 606-628, 634-656, 662-684, and 686-709; these read HFCN…YTVH, FVCQ…NDMH, YVCS…MISH, TICQ…MDVH, and YTCG…NAKH.

As to quaternary structure, homodimer. Homodimer. Interacts (via BTB domain) with TRIM28 (unphosphorylated or phosphorylated form). Sumoylated with SUMO2 at Lys-328 and to a lesser extent at Lys-266. Sumoylation inhibits its transcriptional repression activity and regulates its subcellular localization. As to expression, expressed strongly in thymus and spleen, less in lymph nodes and peripheral blood mononuclear cells (PBMCs) and weakly in bone marrow. Strongly expressed in immature, but weakly in mature bone marrow-lymphocyte B.

It localises to the nucleus. Its subcellular location is the nucleoplasm. Functionally, acts as a transcriptional repressor. Represses cAMP-responsive element (CRE)-mediated transcriptional activation. In addition, has a role in translesion DNA synthesis. Requires for UV-inducible RAD18 loading, PCNA monoubiquitination, POLH recruitment to replication factories and efficient translesion DNA synthesis. Plays a key role in the transcriptional regulation of T lymphocyte development. The sequence is that of Zinc finger and BTB domain-containing protein 1 (Zbtb1) from Mus musculus (Mouse).